Here is a 157-residue protein sequence, read N- to C-terminus: uncharacterized protein (157 aa).

An N-acetyltransferase domain is found at 3 to 157; that stretch reads FTLEDMTEEE…TNIRMRKQLC (155 aa).

The protein belongs to the acetyltransferase family.

This is an uncharacterized protein from Bacillus subtilis (strain 168).